The primary structure comprises 25 residues: Grammistin Pp 3 (25 aa).

Belongs to the grammistin family. Group 3 subfamily. Exists as aggregates of 3-4 molecules. As to expression, expressed by the skin glands.

The protein resides in the secreted. Functionally, thanks to its abundant amphiphilic alpha-helices, it may integrate into membrane phospholipids, leading to lysis of the membrane. Has hemolytic activity. Has antibacterial activity with a broad spectrum against various species of bacteria including both Gram-positive and Gram-negative groups. Also has ichthyotoxic activity. This chain is Grammistin Pp 3, found in Pogonoperca punctata (Clown grouper).